The chain runs to 542 residues: Chloride channel CLIC-like protein 1 (542 aa).

The signal sequence occupies residues 1 to 18 (MLYSLLLCECLWLITAYA). Topologically, residues 19–184 (HDDEWIDPTD…EEFFGVDPYN (166 aa)) are lumenal. A helical transmembrane segment spans residues 185–205 (VFMVLLCLLCIVALVATELWT). Residues 206 to 216 (YVRWYTQLKRV) are Cytoplasmic-facing. Residues 217 to 237 (FFISFLISLGWNWMYLYKLAF) traverse the membrane as a helical segment. At 238-329 (AQHQAEVAKM…GEFIKALMKE (92 aa)) the chain is on the lumenal side. Residues 330 to 350 (IPVLLHIPVLIIMALAVLSFC) traverse the membrane as a helical segment. At 351-542 (YGAGKSVNML…PASTAVEVCG (192 aa)) the chain is on the cytoplasmic side. The disordered stretch occupies residues 369–394 (EAPQALQAGERRRQQKIDYRPHGGAG). The span at 377–389 (GERRRQQKIDYRP) shows a compositional bias: basic and acidic residues. Ser-438 and Ser-464 each carry phosphoserine. Residues 452 to 542 (AREHPKVVPG…PASTAVEVCG (91 aa)) form a disordered region. Positions 480–491 (ESTPTESSTESS) are enriched in low complexity. A Phosphothreonine modification is found at Thr-482. Ser-532 bears the Phosphoserine mark.

The protein belongs to the chloride channel MCLC family. As to quaternary structure, homomultimers. Interacts with mitochondrial protein PIGBOS1 (via C-terminus); the interaction occurs at the mitochondria-associated endoplasmic reticulum (ER) membrane, a zone of contact between the ER and mitochondrial membranes, but does not appear to play a role in ER-mitochondria tethering and is not affected by ER stress. Interacts with CALR.

It is found in the endoplasmic reticulum membrane. It carries out the reaction chloride(in) = chloride(out). The enzyme catalyses bromide(in) = bromide(out). The catalysed reaction is nitrate(in) = nitrate(out). It catalyses the reaction fluoride(in) = fluoride(out). Functionally, anion-selective channel with Ca(2+)-dependent and voltage-independent gating. Permeable to small monovalent anions with selectivity for bromide &gt; chloride &gt; nitrate &gt; fluoride. Operates in the endoplasmic reticulum (ER) membrane where it mediates chloride efflux to compensate for the loss of positive charges from the ER lumen upon Ca(2+) release. Contributes to the maintenance of ER Ca(2+) pools and activation of unfolded protein response to prevent accumulation of misfolded proteins in the ER lumen. Particularly involved in ER homeostasis mechanisms underlying motor neurons and retinal photoreceptors survival. This is Chloride channel CLIC-like protein 1 (CLCC1) from Bos taurus (Bovine).